The primary structure comprises 344 residues: Dihydroorotate dehydrogenase (quinone) (344 aa).

FMN contacts are provided by residues 64-68 (AGLDK) and Thr88. A substrate-binding site is contributed by Lys68. 113 to 117 (NRMGF) lines the substrate pocket. FMN-binding residues include Asn144 and Asn177. Asn177 lines the substrate pocket. The active-site Nucleophile is Ser180. Asn182 is a substrate binding site. Lys222 and Thr250 together coordinate FMN. 251 to 252 (NT) contributes to the substrate binding site. FMN-binding positions include Gly273, Gly302, and 323–324 (YS).

This sequence belongs to the dihydroorotate dehydrogenase family. Type 2 subfamily. In terms of assembly, monomer. FMN is required as a cofactor.

It is found in the cell membrane. The catalysed reaction is (S)-dihydroorotate + a quinone = orotate + a quinol. It participates in pyrimidine metabolism; UMP biosynthesis via de novo pathway; orotate from (S)-dihydroorotate (quinone route): step 1/1. In terms of biological role, catalyzes the conversion of dihydroorotate to orotate with quinone as electron acceptor. This Polynucleobacter asymbioticus (strain DSM 18221 / CIP 109841 / QLW-P1DMWA-1) (Polynucleobacter necessarius subsp. asymbioticus) protein is Dihydroorotate dehydrogenase (quinone).